Here is a 1108-residue protein sequence, read N- to C-terminus: DNA-directed RNA polymerase subunit beta (1108 aa).

Residues 1081-1108 form a disordered region; the sequence is SPRRTPARPTIDYSALDDTDDKEGATTF.

The protein belongs to the RNA polymerase beta chain family. In terms of assembly, in cyanobacteria the RNAP catalytic core is composed of 2 alpha, 1 beta, 1 beta', 1 gamma and 1 omega subunit. When a sigma factor is associated with the core the holoenzyme is formed, which can initiate transcription.

It catalyses the reaction RNA(n) + a ribonucleoside 5'-triphosphate = RNA(n+1) + diphosphate. DNA-dependent RNA polymerase catalyzes the transcription of DNA into RNA using the four ribonucleoside triphosphates as substrates. The polypeptide is DNA-directed RNA polymerase subunit beta (Thermosynechococcus vestitus (strain NIES-2133 / IAM M-273 / BP-1)).